The primary structure comprises 341 residues: Mitochondrial glutathione transporter SLC25A40 (341 aa).

Solcar repeat units follow at residues 14–132 (ITPS…LRDI), 140–224 (RAEI…VKQS), and 234–328 (PTFA…GKSF). 6 helical membrane passes run 20–40 (MIASSMGALLTSFFVTPLDVV), 104–124 (LWSGLPPTLVMAVPATVIYFT), 143–163 (IASLVAGATARLWSATLISPL), 200–221 (WGPTVLRDVPFSALYWHNYELV), 236–256 (FAISFTAGAVSGSIAAIVTLP), and 299–319 (GLFAGLIPRLIKVAPACAIMI).

It belongs to the mitochondrial carrier (TC 2.A.29) family.

It localises to the mitochondrion inner membrane. It carries out the reaction glutathione(in) = glutathione(out). Its function is as follows. Probable mitochondrial transporter required for glutathione import into mitochondria. Glutathione, which plays key roles in oxidative metabolism, is produced exclusively in the cytosol and is imported in many organelles. Mitochondrial glutathione is required for the activity and stability of proteins containing iron-sulfur clusters. In Xenopus tropicalis (Western clawed frog), this protein is Mitochondrial glutathione transporter SLC25A40.